The chain runs to 2119 residues: MDGVYSEANEENDNTQRPVRRQHSSILKPPRSPLQDLKCGNQTNQEPNPPRKRKSSRRVSFADTIKVFQTESHMKTERNSEISGMNTLLCAPIQTQMQQKEFSITDCNHERKHANDQTVIFSDENQMDLTASHTVMITKGLSDCTKNENSTKIDTTSFLENLKHHAANSRIKKDLACSTVSLSQNIFSEKINSDNFIKRLKTGKHISSSTELDKENAEIPVYSKDSNSASSTYQMHASLGVDENSSNRTRIFREQDDGMNLTQCHTACIKTWIPPSTEAKIGEFKGDKTIYGNECMELTTNYTIQVLSSENNLSERETQTQNGMNVTTVDGATAPAPEKKTALKDKLNAAFQGSFPNPENKIHIIKCHPIESETHTVTQISSQSASTLAVTSKSICSSPAIEGYKTIFHSSSNDAMELTKCLSAMEEEKKLLKADDKYSKICTNPDAGPLREKTIYLEEDSMDITKSHTVAIDNKIFKHDQENIKKEIIAIPIFEKEMVLRNLMPMSKDEKRDVNYISVPQVSKESLQRSQTNTLSVSLTDKKMEFLADEDMDLTKSHTTKLSQVIPTTFDLASKNVTKSYSHSKSPLNEWESLDKQVVLGQHSKLPLPQRKDRDDPDCSHHKIMYSEELQTMDLTKSHTIVIGFGPSEVQEHSKINLEHKNSQLTAESIQTAVNVPAANSRVVTTNDMDMLKDRSTHKPELLKEKQNIKIYGRKSIGRLKIDKTILFSEGNEGDMDITKSCTVKINHRSLLDKHDSHLVSLAGTSKTILHARGQVEMEINRSHTTPLECKIISPSDITPGDLDKTMMSIDDHEELDMTKSHTVFIDYQAEAKGVLPDRLDFQLSKKESLQKPKVTSLAEEIYISKNSESNHLPAKGSQLTILEEGSNSGLGEETNDAQKPGFLNELLSGKTQRRKSLSLKNKSITFPENDKSYREIPQSSAVEINNETRLEDRKGFSFVPLAGTSKPVLSAYGPEDMEISIGQTTASEYKTVPPEEITTIPMDKTVMFVDNFGDLDVTRSHTVFIDCQAKEKVLDEYTNLGIQKTKTLSGSEGDTHIQEITKNPAAQHKHHMTTVIPSSTVVSDQSSMKIKFHKADRDEEVKGKEVEANMLKQTKPESCLLNITDGKNVDFTSSYTADVCRSSDKYSSLPNISSSDNSGGNTMSLCDKNKEKAYNCQVPNEFTYAAILPSTYHMDSKKLSVFPPCPSKEVTQTESAIALLKDEDPVEEPLGEMATFNSKHVSLNLAKDQTEAFVDVSVASQPHLSAQQSPSTQKGQDVARRDEGILAKAGKKALPFLLENVAASTWENESKIPTNVEHFAVTYEKELSISIQTDKCNTNVQSPSNSALTTQVIQTHANAEGALDFLVPSTVSCFSSTKPSLSNLNRKTEEVLDFQTVNLLPPAEQLLEEGSQAHSMSIVQATEIYRLGSRNDRDEESKTFCNEAETTSVPLKTAVKDKTRRCSLGIFLPKLPSKRSCSITGVDDLEQILADAADLTQLETQPVCSKDPGIGSVAAKLNLSPSQFINEENLPVYPGEILSSDSVSLDIEESVLIDTSQRESLPSENKTENCRAQKRTRVEENDVTNEKKIRTHDSAQDQEIFDNHMEEDINKNVNSVLLKSLSRTPSSCSSSLDSIKSDGLSLDVSTQRNSQMESQFLGDTISEESLKEKLKDGQITIKEFFILLQVHILIQKPRQSTLPAKFTINTLPTTEDLMLRQYVYGPRIQIYKEDCELLRQKIDELKISALNQNKLLADVNRNLWEKVKDYSDEELKNYGIYLNKIKSRYTKMTKVFNHQGKVALYNKLVHSAENEKNKLQIKINEMDTILKKINNCLAEVETETKNLENEEKNDAMEEWDSEMRDAEKELEQLKTEEEELQRKFLEVETQKTQTLAQIEFIKEQTTKTEELLDQLSLSEWDVIEWSDDQAVFTFVYDSIELIITFGEPLVGLPFLDKACRKINALSFQSLLDEDKAPPSSLLVHKLIFQYIEEQESWKKKCTAQHQVPQMLQELSLVVNHCRLLGEEIEFLKRWGPNYSLMHINVNNTELRLLFSSCAAFAKFEITLSPSAHYPLVPLPFTIHNHIGKTGHDEIAAIISKVPLEENYLKNVVKQIYQDLLKD.

Residues 1 to 59 (MDGVYSEANEENDNTQRPVRRQHSSILKPPRSPLQDLKCGNQTNQEPNPPRKRKSSRRV) are disordered. The interval 1–202 (MDGVYSEANE…SDNFIKRLKT (202 aa)) is may mediate oligomerization. Interaction with microtubules regions lie at residues 17-34 (RPVR…RSPL) and 53-80 (RKSS…ERNS). The segment at 23–80 (HSSILKPPRSPLQDLKCGNQTNQEPNPPRKRKSSRRVSFADTIKVFQTESHMKTERNS) is interaction with PP1CA; contains the protein phosphatase 1 (PP1) interaction motifs SILK, RVXF and phi-phi. Residues Ser-24, Ser-32, and Ser-60 each carry the phosphoserine modification. The interaction with BUB1 stretch occupies residues 124–140 (ENQMDLTASHTVMITKG). The interaction with BUB1B stretch occupies residues 160–179 (ENLKHHAANSRIKKDLACST). Ser-538 is modified (phosphoserine). 2 positions are modified to phosphothreonine: Thr-540 and Thr-739. Repeat 1 spans residues 723-827 (DKTILFSEGN…MTKSHTVFID (105 aa)). A 2 X 104 AA approximate repeats region spans residues 723-1027 (DKTILFSEGN…VTRSHTVFID (305 aa)). Ser-794 and Ser-878 each carry phosphoserine. Copy 2 of the repeat occupies 923–1027 (KSITFPENDK…VTRSHTVFID (105 aa)). Phosphoserine occurs at positions 1243 and 1464. Positions 1557–1583 (SQRESLPSENKTENCRAQKRTRVEEND) are disordered. Basic and acidic residues predominate over residues 1566–1583 (NKTENCRAQKRTRVEEND). The Nuclear localization signal signature appears at 1577–1590 (TRVEENDVTNEKKI). Residues Ser-1616, Ser-1627, and Ser-1642 each carry the phosphoserine modification. The tract at residues 1763-1890 (KVKDYSDEEL…FLEVETQKTQ (128 aa)) is required for interaction with ZWINT. Residues 1799–1890 (VALYNKLVHS…FLEVETQKTQ (92 aa)) are a coiled coil. The tract at residues 1873–2093 (EEEELQRKFL…GKTGHDEIAA (221 aa)) is interaction with NSL1, DSN1 and required for assembly into the outer kinetochore.

Component of the KNL1 complex composed of KNL1 and ZWINT. Part of the ten-subunit outer kinetochore KMN network that includes the KNL1, MIS12 and NDC80 complexes; a bioriented kinetochore contains approximately 150 copies of the network. Interacts (via C-terminus) with the MIS12 complex subunits NSL1 (via C-terminus), PMF1 and DSN1; the interaction is direct. Interacts (via N-terminal region) with BUB1B (via BUB1 N-terminal domain); the interaction is direct and is required for cell cycle arrest upon activation of the mitotic spindle assembly checkpoint. Interacts (via N-terminal region) with BUB1 (via BUB1 N-terminal domain); the interaction is direct. Interacts with the protein phosphatase PP1 subunit PPP1CA; the interaction is direct and mutually exclusive with binding to microtubules. Interacts with the protein phosphatase PP1 subunit PPP1CC; the interaction is direct and mutually exclusive with binding to microtubules. Phosphorylation by AURKB negatively regulates its interaction with protein phosphatase 1 (PP1) subunit PPP1CA and with microtubules. As to expression, expressed in oocytes during meiotic progression (at protein level). Expressed during spermatogenesis.

It localises to the nucleus. It is found in the chromosome. The protein resides in the centromere. Its subcellular location is the kinetochore. The protein localises to the cytoplasm. Acts as a component of the outer kinetochore KNL1 complex that serves as a docking point for spindle assembly checkpoint components and mediates microtubule-kinetochore interactions. Kinetochores, consisting of a centromere-associated inner segment and a microtubule-contacting outer segment, play a crucial role in chromosome segregation by mediating the physical connection between centromeric DNA and spindle microtubules. The outer kinetochore is made up of the ten-subunit KMN network, comprising the MIS12, NDC80 and KNL1 complexes, and auxiliary microtubule-associated components; together they connect the outer kinetochore with the inner kinetochore, bind microtubules, and mediate interactions with mitotic checkpoint proteins that delay anaphase until chromosomes are bioriented on the spindle. Required for kinetochore binding by a distinct subset of kMAPs (kinetochore-bound microtubule-associated proteins) and motors. Acts in coordination with CENPK to recruit the NDC80 complex to the outer kinetochore. Can bind either to microtubules or to the protein phosphatase 1 (PP1) catalytic subunits PPP1CA and PPP1CC (via overlapping binding sites), it has higher affinity for PP1. Recruits MAD2L1 to the kinetochore and also directly links BUB1 and BUB1B to the kinetochore. In addition to orienting mitotic chromosomes, it is also essential for alignment of homologous chromosomes during meiotic metaphase I. In meiosis I, required to activate the spindle assembly checkpoint at unattached kinetochores to correct erroneous kinetochore-microtubule attachments. The chain is Outer kinetochore KNL1 complex subunit KNL1 from Mus musculus (Mouse).